The primary structure comprises 440 residues: Trigger factor (440 aa).

The 94-residue stretch at 160–253 folds into the PPIase FKBP-type domain; sequence KDTVIGDALR…VTEVKRLELP (94 aa).

The protein belongs to the FKBP-type PPIase family. Tig subfamily.

The protein localises to the cytoplasm. It catalyses the reaction [protein]-peptidylproline (omega=180) = [protein]-peptidylproline (omega=0). Functionally, involved in protein export. Acts as a chaperone by maintaining the newly synthesized protein in an open conformation. Functions as a peptidyl-prolyl cis-trans isomerase. This is Trigger factor from Chlorobium chlorochromatii (strain CaD3).